The following is an 83-amino-acid chain: Cytochrome b559 subunit alpha (83 aa).

A helical membrane pass occupies residues 21 to 35 (VIHSITIPSLFIAGW). Residue His23 participates in heme binding.

The protein belongs to the PsbE/PsbF family. In terms of assembly, heterodimer of an alpha subunit and a beta subunit. PSII is composed of 1 copy each of membrane proteins PsbA, PsbB, PsbC, PsbD, PsbE, PsbF, PsbH, PsbI, PsbJ, PsbK, PsbL, PsbM, PsbT, PsbX, PsbY, PsbZ, Psb30/Ycf12, at least 3 peripheral proteins of the oxygen-evolving complex and a large number of cofactors. It forms dimeric complexes. The cofactor is heme b.

Its subcellular location is the plastid. The protein resides in the chloroplast thylakoid membrane. This b-type cytochrome is tightly associated with the reaction center of photosystem II (PSII). PSII is a light-driven water:plastoquinone oxidoreductase that uses light energy to abstract electrons from H(2)O, generating O(2) and a proton gradient subsequently used for ATP formation. It consists of a core antenna complex that captures photons, and an electron transfer chain that converts photonic excitation into a charge separation. This is Cytochrome b559 subunit alpha from Agrostis stolonifera (Creeping bentgrass).